Reading from the N-terminus, the 127-residue chain is Ribosome-binding factor A (127 aa).

It belongs to the RbfA family. As to quaternary structure, monomer. Binds 30S ribosomal subunits, but not 50S ribosomal subunits or 70S ribosomes.

It is found in the cytoplasm. One of several proteins that assist in the late maturation steps of the functional core of the 30S ribosomal subunit. Associates with free 30S ribosomal subunits (but not with 30S subunits that are part of 70S ribosomes or polysomes). Required for efficient processing of 16S rRNA. May interact with the 5'-terminal helix region of 16S rRNA. The polypeptide is Ribosome-binding factor A (Nitrosococcus oceani (strain ATCC 19707 / BCRC 17464 / JCM 30415 / NCIMB 11848 / C-107)).